The chain runs to 314 residues: Replication initiation protein (314 aa).

This sequence belongs to the plasmid replication initiation factor family.

Functionally, this protein is probably a specific topoisomerase involved in initiating replication. This protein is specifically required and may be rate-limiting for replication of the plasmid in vivo. The polypeptide is Replication initiation protein (repC) (Staphylococcus aureus).